The sequence spans 260 residues: Proline-rich protein 33 (260 aa).

Residues 29-132 (GVQTVSPRPE…KVAPKPSRSG (104 aa)) are disordered. Residues 73–83 (GPSPYSPPPAA) are compositionally biased toward pro residues.

The chain is Proline-rich protein 33 (Prr33) from Mus musculus (Mouse).